A 201-amino-acid chain; its full sequence is MYB-like transcription factor EOBI (201 aa).

HTH myb-type domains follow at residues 10 to 62 (DVEV…LNYL) and 63 to 117 (RPDV…QKHI). DNA-binding regions (H-T-H motif) lie at residues 38-62 (WNSL…LNYL) and 90-113 (WSKI…RTRI). Positions 121–170 (DQNMKKPSKCEQNDQKAISTSQASTGPTDTIDSYSPSSYTENTNNNMENI) are disordered. The segment covering 135–159 (QKAISTSQASTGPTDTIDSYSPSSY) has biased composition (polar residues). Residues 160 to 169 (TENTNNNMEN) are compositionally biased toward low complexity.

As to expression, expressed exclusively in flower organs. Accumulates mostly in flower limbs, to a lower extent in pistils and flower tubes, and, at low levels, in stamens.

It localises to the nucleus. Its function is as follows. MYB-type transcription factor controlling the production of volatile organic compounds (VOCs), including floral volatile benzenoids and phenylpropanoids (FVBP), in flowers of fragrant cultivars (e.g. cv. Mitchell and cv. V26) by regulating the expression of ODO1, a key regulator of the shikimate pathway, and of several biosynthetic floral scent-related genes (e.g. IGS, EGS, BSMT1, BSMT2, PAL1, PAL2, EPSPS, DAHPS, CS, CM1, ADT1 and PPA-AT). Binds to and activates the promoters of at least ODO1, IGS1 and PAL1. This Petunia hybrida (Petunia) protein is MYB-like transcription factor EOBI.